A 224-amino-acid polypeptide reads, in one-letter code: PKHD-type hydroxylase CYB_2270 (224 aa).

The 99-residue stretch at 78–176 (LIHSILISCY…RYAAVSWVQS (99 aa)) folds into the Fe2OG dioxygenase domain. Residues His96, Asp98, and His157 each coordinate Fe cation. Arg167 serves as a coordination point for 2-oxoglutarate.

It depends on Fe(2+) as a cofactor. The cofactor is L-ascorbate.

This Synechococcus sp. (strain JA-2-3B'a(2-13)) (Cyanobacteria bacterium Yellowstone B-Prime) protein is PKHD-type hydroxylase CYB_2270.